The following is a 425-amino-acid chain: Podosporapepsin (425 aa).

Residues 1–28 form the signal peptide; that stretch reads MVSLTDLFLASLLVPTSPWLCLPPRIDT. Residues 29 to 91 constitute a propeptide, activation peptide; that stretch reads IDQRGGRVTL…QEEAFARIKR (63 aa). The region spanning 108–419 is the Peptidase A1 domain; sequence YVTPVTIGTP…GTNPPRIGFA (312 aa). Asp126 is a catalytic residue. Asn184 and Asn273 each carry an N-linked (GlcNAc...) asparagine glycan. Asp310 is a catalytic residue. A disulfide bridge connects residues Cys346 and Cys381. The N-linked (GlcNAc...) asparagine glycan is linked to Asn370.

It belongs to the peptidase A1 family.

The sequence is that of Podosporapepsin (PAPA) from Podospora anserina (Pleurage anserina).